Here is a 443-residue protein sequence, read N- to C-terminus: Xaa-Pro dipeptidase (443 aa).

Mn(2+) contacts are provided by aspartate 246, aspartate 257, histidine 339, glutamate 384, and glutamate 423.

This sequence belongs to the peptidase M24B family. Bacterial-type prolidase subfamily. Mn(2+) serves as cofactor.

The enzyme catalyses Xaa-L-Pro dipeptide + H2O = an L-alpha-amino acid + L-proline. Functionally, splits dipeptides with a prolyl residue in the C-terminal position. The chain is Xaa-Pro dipeptidase from Yersinia pestis bv. Antiqua (strain Nepal516).